The chain runs to 628 residues: 1-deoxy-D-xylulose-5-phosphate synthase (628 aa).

Thiamine diphosphate is bound by residues H72 and 113 to 115 (GHA). D144 is a binding site for Mg(2+). Thiamine diphosphate-binding positions include 145 to 146 (GA), N174, Y287, and E370. N174 contacts Mg(2+).

The protein belongs to the transketolase family. DXPS subfamily. In terms of assembly, homodimer. The cofactor is Mg(2+). Requires thiamine diphosphate as cofactor.

The enzyme catalyses D-glyceraldehyde 3-phosphate + pyruvate + H(+) = 1-deoxy-D-xylulose 5-phosphate + CO2. The protein operates within metabolic intermediate biosynthesis; 1-deoxy-D-xylulose 5-phosphate biosynthesis; 1-deoxy-D-xylulose 5-phosphate from D-glyceraldehyde 3-phosphate and pyruvate: step 1/1. In terms of biological role, catalyzes the acyloin condensation reaction between C atoms 2 and 3 of pyruvate and glyceraldehyde 3-phosphate to yield 1-deoxy-D-xylulose-5-phosphate (DXP). The protein is 1-deoxy-D-xylulose-5-phosphate synthase of Prochlorococcus marinus (strain NATL2A).